Here is a 398-residue protein sequence, read N- to C-terminus: Cholinephosphotransferase 1 (398 aa).

Ala2 bears the N-acetylalanine mark. Over 2–62 (AAGAGARPAP…LLQWIPLWIA (61 aa)) the chain is Cytoplasmic. Residues 63–83 (PNTITLFGLAINLFTTLVLIF) traverse the membrane as a helical segment. Asn64 serves as a coordination point for CDP-choline. Over 84–93 (YCPTVTEEAP) the chain is Lumenal. A helical membrane pass occupies residues 94-118 (YWTYLLCALGLFIYQSLDAIDGKQA). Residues Asp111 and Asp114 each contribute to the Mg(2+) site. Arg119 contacts CDP-choline. Topologically, residues 119–125 (RRTNSCS) are cytoplasmic. The helical transmembrane segment at 126–150 (PLGELFDHGCDSLSTVFMAIGASIA) threads the bilayer. Asp132 is a Mg(2+) binding site. His133 acts as the Proton acceptor in catalysis. Residue Asp136 coordinates Mg(2+). The Lumenal portion of the chain corresponds to 151-160 (VRLGTHPDWL). Residues 161–179 (FFCSFVGMFMFYCAHWQTY) form a helical membrane-spanning segment. Residues 180 to 190 (VSGVLRFGRVD) are Cytoplasmic-facing. The helical transmembrane segment at 191–207 (VTEIQVALVIVFLLSTF) threads the bilayer. The Lumenal segment spans residues 208-222 (GGAMMWDYTIPILEI). Residues 223 to 248 (KLKILPVLGVVGGLIFSCSNYFHVIL) traverse the membrane as a helical segment. Over 249–265 (HGGVGKNGSTIAGTSVL) the chain is Cytoplasmic. The chain crosses the membrane as a helical span at residues 266–281 (SPGLHIGLIIILAIMI). Residues 282–293 (YKKSATNVFEKH) are Lumenal-facing. The chain crosses the membrane as a helical span at residues 294–316 (PCLYTLMFGCVFAKVAQKLVIAH). Residues 317–329 (MTKSELYLQDTVF) are Cytoplasmic-facing. The chain crosses the membrane as a helical span at residues 330-339 (IGPGLLFLDQ). At 340 to 346 (YFNNFID) the chain is on the lumenal side. Residues 347-376 (EYVVLWIAMVITSFDMMIYFSSLCLQISRH) form a helical membrane-spanning segment. At 377–398 (LHLSIFKTSYQQAPEQVHKHID) the chain is on the cytoplasmic side.

Belongs to the CDP-alcohol phosphatidyltransferase class-I family. Requires Mg(2+) as cofactor. Mn(2+) is required as a cofactor.

It localises to the golgi apparatus membrane. The catalysed reaction is CDP-choline + a 1,2-diacyl-sn-glycerol = a 1,2-diacyl-sn-glycero-3-phosphocholine + CMP + H(+). The enzyme catalyses 1-octadecanoyl-2-(5Z,8Z,11Z,14Z-eicosatetraenoyl)-sn-glycerol + CDP-choline = 1-octadecanoyl-2-(5Z,8Z,11Z,14Z-eicosatetraenoyl)-sn-glycero-3-phosphocholine + CMP + H(+). It catalyses the reaction 1-hexadecanoyl-2-(9Z-octadecenoyl)-sn-glycerol + CDP-choline = 1-hexadecanoyl-2-(9Z-octadecenoyl)-sn-glycero-3-phosphocholine + CMP + H(+). It carries out the reaction 1-hexadecanoyl-2-(4Z,7Z,10Z,13Z,16Z,19Z-docosahexaenoyl)-sn-glycerol + CDP-choline = 1-hexadecanoyl-2-(4Z,7Z,10Z,13Z,16Z,19Z-docosahexaenoyl)-sn-glycero-3-phosphocholine + CMP + H(+). The catalysed reaction is 1,2-dioctanoyl-sn-glycerol + CDP-choline = 1,2-dioctanoyl-sn-glycero-3-phosphocholine + CMP + H(+). It functions in the pathway phospholipid metabolism; phosphatidylcholine biosynthesis; phosphatidylcholine from phosphocholine: step 2/2. In terms of biological role, catalyzes the final step of de novo phosphatidylcholine (PC) synthesis, i.e. the transfer of choline phosphate from CDP-choline to the free hydroxyl of a diacylglycerol (DAG), producing a PC. It thereby plays a central role in the formation and maintenance of vesicular membranes. The sequence is that of Cholinephosphotransferase 1 from Rattus norvegicus (Rat).